Reading from the N-terminus, the 592-residue chain is Aspartate--tRNA ligase (592 aa).

Glutamate 171 serves as a coordination point for L-aspartate. An aspartate region spans residues glutamine 195–lysine 198. L-aspartate is bound at residue arginine 217. Residues arginine 217 to glutamate 219 and glutamine 226 contribute to the ATP site. An L-aspartate-binding site is contributed by histidine 448. Glutamate 482 contacts ATP. Residue arginine 489 participates in L-aspartate binding. Glycine 534–arginine 537 contacts ATP.

It belongs to the class-II aminoacyl-tRNA synthetase family. Type 1 subfamily. Homodimer.

It is found in the cytoplasm. It carries out the reaction tRNA(Asp) + L-aspartate + ATP = L-aspartyl-tRNA(Asp) + AMP + diphosphate. Catalyzes the attachment of L-aspartate to tRNA(Asp) in a two-step reaction: L-aspartate is first activated by ATP to form Asp-AMP and then transferred to the acceptor end of tRNA(Asp). The protein is Aspartate--tRNA ligase of Vibrio vulnificus (strain YJ016).